The chain runs to 377 residues: uncharacterized protein (377 aa).

This is an uncharacterized protein from Magallana gigas (Pacific oyster).